Here is a 129-residue protein sequence, read N- to C-terminus: Large ribosomal subunit protein bL12 (129 aa).

Belongs to the bacterial ribosomal protein bL12 family. Homodimer. Part of the ribosomal stalk of the 50S ribosomal subunit. Forms a multimeric L10(L12)X complex, where L10 forms an elongated spine to which 2 to 4 L12 dimers bind in a sequential fashion. Binds GTP-bound translation factors.

Functionally, forms part of the ribosomal stalk which helps the ribosome interact with GTP-bound translation factors. Is thus essential for accurate translation. The protein is Large ribosomal subunit protein bL12 of Pelotomaculum thermopropionicum (strain DSM 13744 / JCM 10971 / SI).